An 80-amino-acid chain; its full sequence is Acyl carrier protein (80 aa).

Residues 4 to 79 form the Carrier domain; sequence QEIFEKVKAV…DAVEYIKAKL (76 aa). An O-(pantetheine 4'-phosphoryl)serine modification is found at Ser39.

This sequence belongs to the acyl carrier protein (ACP) family. Post-translationally, 4'-phosphopantetheine is transferred from CoA to a specific serine of apo-ACP by AcpS. This modification is essential for activity because fatty acids are bound in thioester linkage to the sulfhydryl of the prosthetic group.

It is found in the cytoplasm. The protein operates within lipid metabolism; fatty acid biosynthesis. Carrier of the growing fatty acid chain in fatty acid biosynthesis. The sequence is that of Acyl carrier protein from Thermus thermophilus (strain ATCC BAA-163 / DSM 7039 / HB27).